We begin with the raw amino-acid sequence, 360 residues long: Mannonate dehydratase (360 aa).

Belongs to the mannonate dehydratase family. Fe(2+) is required as a cofactor. The cofactor is Mn(2+).

It carries out the reaction D-mannonate = 2-dehydro-3-deoxy-D-gluconate + H2O. Its pathway is carbohydrate metabolism; pentose and glucuronate interconversion. Its function is as follows. Catalyzes the dehydration of D-mannonate. This Thermotoga neapolitana protein is Mannonate dehydratase (uxuA).